The chain runs to 324 residues: tRNA dimethylallyltransferase (324 aa).

An ATP-binding site is contributed by 17-24 (GPTASGKT). 19–24 (TASGKT) contacts substrate. 3 interaction with substrate tRNA regions span residues 42–45 (DSAL), 166–170 (QRIQR), and 251–256 (RCVGYR).

Belongs to the IPP transferase family. In terms of assembly, monomer. Requires Mg(2+) as cofactor.

The catalysed reaction is adenosine(37) in tRNA + dimethylallyl diphosphate = N(6)-dimethylallyladenosine(37) in tRNA + diphosphate. Functionally, catalyzes the transfer of a dimethylallyl group onto the adenine at position 37 in tRNAs that read codons beginning with uridine, leading to the formation of N6-(dimethylallyl)adenosine (i(6)A). This Burkholderia pseudomallei (strain 1106a) protein is tRNA dimethylallyltransferase.